Here is an 838-residue protein sequence, read N- to C-terminus: Probable inorganic carbon transporter subunit DabA (838 aa).

Residues Cys353, Asp355, His537, and Cys552 each coordinate Zn(2+).

This sequence belongs to the inorganic carbon transporter (TC 9.A.2) DabA family. As to quaternary structure, forms a complex with DabB. Zn(2+) serves as cofactor.

It is found in the cell membrane. Its function is as follows. Part of an energy-coupled inorganic carbon pump. The sequence is that of Probable inorganic carbon transporter subunit DabA from Chloroflexus aurantiacus (strain ATCC 29366 / DSM 635 / J-10-fl).